The chain runs to 977 residues: Aspartate, glycine, lysine and serine-rich protein (977 aa).

Residues Gly-23–Ser-116 form a disordered region. The segment covering Glu-37–Pro-50 has biased composition (basic and acidic residues). Polar residues predominate over residues Glu-51–Asn-63. N-linked (GlcNAc...) asparagine glycosylation occurs at Asn-136. 2 disordered regions span residues Ala-246 to Gly-767 and Gly-780 to Leu-922. The segment covering Tyr-251–Ser-278 has biased composition (low complexity). Over residues Asn-309–Thr-325 the composition is skewed to polar residues. A compositionally biased stretch (acidic residues) spans Leu-410–Asp-427. The segment covering Gly-428–Gly-443 has biased composition (gly residues). Composition is skewed to basic residues over residues Thr-447 to Lys-457 and Lys-465 to Lys-540. Positions Gln-541 to Ser-557 are enriched in basic and acidic residues. The span at Lys-572–Gly-583 shows a compositional bias: low complexity. Residues Asp-591 to Asp-643 show a composition bias toward gly residues. Positions Glu-660–Cys-675 are enriched in basic and acidic residues. Positions Ser-700–Ser-724 are enriched in low complexity. Polar residues-rich tracts occupy residues Ile-730 to Gly-744, Ser-758 to Gly-767, and Ser-785 to Ala-801. Composition is skewed to low complexity over residues Gly-803–Gly-814, Gly-822–Gly-857, and Lys-870–Pro-907.

In terms of tissue distribution, component of the acid-insoluble and acid-soluble organic matrix of calcified layers of the shell (at protein level).

The protein resides in the secreted. The protein is Aspartate, glycine, lysine and serine-rich protein of Lottia gigantea (Giant owl limpet).